The chain runs to 43 residues: Protein PsbN (43 aa).

The helical transmembrane segment at 5 to 27 (TLVAISISGSLVSFTGYALYTAF) threads the bilayer.

Belongs to the PsbN family.

It localises to the plastid. The protein localises to the chloroplast thylakoid membrane. Its function is as follows. May play a role in photosystem I and II biogenesis. This chain is Protein PsbN, found in Lactoris fernandeziana.